Reading from the N-terminus, the 272-residue chain is Short-chain dehydrogenase reductase ATA1 (272 aa).

Position 14 to 38 (14 to 38 (IITGGARGIGAATARLFTENGAYVI)) interacts with NADP(+). S143 provides a ligand contact to substrate. Residue Y156 is the Proton acceptor of the active site. K160 is a binding site for NADP(+).

The protein belongs to the short-chain dehydrogenases/reductases (SDR) family. As to expression, expressed specifically in tapetal cells.

May play a role in tapetum development. The chain is Short-chain dehydrogenase reductase ATA1 from Arabidopsis thaliana (Mouse-ear cress).